We begin with the raw amino-acid sequence, 356 residues long: D-alanine--D-alanine ligase (356 aa).

One can recognise an ATP-grasp domain in the interval K134 to E339. Position 167–222 (N167–E222) interacts with ATP. Mg(2+) is bound by residues D293, E306, and N308.

It belongs to the D-alanine--D-alanine ligase family. It depends on Mg(2+) as a cofactor. Mn(2+) is required as a cofactor.

Its subcellular location is the cytoplasm. It carries out the reaction 2 D-alanine + ATP = D-alanyl-D-alanine + ADP + phosphate + H(+). It participates in cell wall biogenesis; peptidoglycan biosynthesis. Functionally, cell wall formation. This chain is D-alanine--D-alanine ligase, found in Staphylococcus aureus (strain MRSA252).